A 192-amino-acid polypeptide reads, in one-letter code: Sarcoplasmic calcium-binding protein 1 (192 aa).

Ala-1 carries the N-acetylalanine modification. EF-hand domains are found at residues 4-39, 56-91, 100-135, and 136-171; these read WDNR…NTLI, IMSN…VCVG, AFKV…RSAF, and ANIK…YAQF. The Ca(2+) site is built by Asp-17, Asp-19, Asn-21, Asp-28, Asp-69, Asn-71, Asp-73, Glu-75, Glu-80, Asp-113, Asn-115, Asp-117, and Glu-124.

As to quaternary structure, SCPs from crayfish, lobster, and shrimp are polymorphic dimers.

Like parvalbumins, SCPs seem to be more abundant in fast contracting muscles, but no functional relationship can be established from this distribution. This Astacus leptodactylus (Turkish narrow-clawed crayfish) protein is Sarcoplasmic calcium-binding protein 1.